Consider the following 467-residue polypeptide: Tubulin beta-1 chain (467 aa).

GTP contacts are provided by Gln-11, Glu-69, Ser-138, Gly-142, Thr-143, Gly-144, Asn-204, and Asn-226. Glu-69 serves as a coordination point for Mg(2+). Acidic residues predominate over residues 429 to 444; sequence TIDDEEGGEEEEGGAE. The disordered stretch occupies residues 429-448; sequence TIDDEEGGEEEEGGAEEEAR.

It belongs to the tubulin family. In terms of assembly, dimer of alpha and beta chains. A typical microtubule is a hollow water-filled tube with an outer diameter of 25 nm and an inner diameter of 15 nM. Alpha-beta heterodimers associate head-to-tail to form protofilaments running lengthwise along the microtubule wall with the beta-tubulin subunit facing the microtubule plus end conferring a structural polarity. Microtubules usually have 13 protofilaments but different protofilament numbers can be found in some organisms and specialized cells. Requires Mg(2+) as cofactor.

The protein resides in the cytoplasm. It localises to the cytoskeleton. Its subcellular location is the spindle. The protein localises to the nucleus. Its function is as follows. Tubulin is the major constituent of microtubules, a cylinder consisting of laterally associated linear protofilaments composed of alpha- and beta-tubulin heterodimers. Microtubules grow by the addition of GTP-tubulin dimers to the microtubule end, where a stabilizing cap forms. Below the cap, tubulin dimers are in GDP-bound state, owing to GTPase activity of alpha-tubulin. In Physarum polycephalum (Slime mold), this protein is Tubulin beta-1 chain (BETA).